A 93-amino-acid polypeptide reads, in one-letter code: Cell division protein CrgA (93 aa).

Helical transmembrane passes span 31 to 51 (VWFVALFIGLMLIGLVWLMVF) and 70 to 90 (LGPWNYAIAFAFMITGLLLTM).

Belongs to the CrgA family.

It localises to the cell membrane. Involved in cell division. The polypeptide is Cell division protein CrgA (Mycobacterium marinum (strain ATCC BAA-535 / M)).